The primary structure comprises 260 residues: Neuraminyllactose-binding hemagglutinin (260 aa).

The first 27 residues, 1-27 (MRANNHFKDFAWKKCLLGASVVALLVG), serve as a signal peptide directing secretion. Residue C28 is the site of N-palmitoyl cysteine attachment. The S-diacylglycerol cysteine moiety is linked to residue C28. Residues 134-139 (KRTIQK) form an N-acetyl-neuraminyl-alpha(2,3)-lactose binding motif region.

It localises to the cell outer membrane. This Helicobacter pylori (Campylobacter pylori) protein is Neuraminyllactose-binding hemagglutinin (hpaA).